Reading from the N-terminus, the 911-residue chain is Protein translocase subunit SecA (911 aa).

Residues Q87, 105–109 (GEGKT), and D513 contribute to the ATP site. Residues 853-911 (IQLQHEQVSGLEPEAGEAPSAGEPRSEQPYVRAGRKVGRNDPCPCGSGKKFKACHGKLG) form a disordered region. The span at 862 to 875 (GLEPEAGEAPSAGE) shows a compositional bias: low complexity. Zn(2+)-binding residues include C895, C897, C906, and H907. Positions 901-911 (KKFKACHGKLG) are enriched in basic residues.

This sequence belongs to the SecA family. In terms of assembly, monomer and homodimer. Part of the essential Sec protein translocation apparatus which comprises SecA, SecYEG and auxiliary proteins SecDF-YajC and YidC. Requires Zn(2+) as cofactor.

It is found in the cell inner membrane. The protein localises to the cytoplasm. The enzyme catalyses ATP + H2O + cellular proteinSide 1 = ADP + phosphate + cellular proteinSide 2.. Functionally, part of the Sec protein translocase complex. Interacts with the SecYEG preprotein conducting channel. Has a central role in coupling the hydrolysis of ATP to the transfer of proteins into and across the cell membrane, serving both as a receptor for the preprotein-SecB complex and as an ATP-driven molecular motor driving the stepwise translocation of polypeptide chains across the membrane. This chain is Protein translocase subunit SecA, found in Teredinibacter turnerae (strain ATCC 39867 / T7901).